A 215-amino-acid polypeptide reads, in one-letter code: N-(5'-phosphoribosyl)anthranilate isomerase (215 aa).

It belongs to the TrpF family.

The enzyme catalyses N-(5-phospho-beta-D-ribosyl)anthranilate = 1-(2-carboxyphenylamino)-1-deoxy-D-ribulose 5-phosphate. The protein operates within amino-acid biosynthesis; L-tryptophan biosynthesis; L-tryptophan from chorismate: step 3/5. The protein is N-(5'-phosphoribosyl)anthranilate isomerase of Paramagnetospirillum magneticum (strain ATCC 700264 / AMB-1) (Magnetospirillum magneticum).